The chain runs to 379 residues: Cytochrome b (379 aa).

A run of 4 helical transmembrane segments spans residues 34 to 54, 78 to 99, 114 to 134, and 179 to 199; these read FGSL…LLAM, WLIR…YLHI, WNTG…GYVL, and FFAL…IHLT. Heme b contacts are provided by His-84 and His-98. Heme b contacts are provided by His-183 and His-197. His-202 is an a ubiquinone binding site. Transmembrane regions (helical) follow at residues 227-247, 289-309, 321-341, and 348-368; these read LKDI…AFFS, LGGV…PFLH, LSQV…WIGS, and FIII…ILFP.

This sequence belongs to the cytochrome b family. In terms of assembly, the cytochrome bc1 complex contains 11 subunits: 3 respiratory subunits (MT-CYB, CYC1 and UQCRFS1), 2 core proteins (UQCRC1 and UQCRC2) and 6 low-molecular weight proteins (UQCRH/QCR6, UQCRB/QCR7, UQCRQ/QCR8, UQCR10/QCR9, UQCR11/QCR10 and a cleavage product of UQCRFS1). This cytochrome bc1 complex then forms a dimer. It depends on heme b as a cofactor.

It localises to the mitochondrion inner membrane. In terms of biological role, component of the ubiquinol-cytochrome c reductase complex (complex III or cytochrome b-c1 complex) that is part of the mitochondrial respiratory chain. The b-c1 complex mediates electron transfer from ubiquinol to cytochrome c. Contributes to the generation of a proton gradient across the mitochondrial membrane that is then used for ATP synthesis. The sequence is that of Cytochrome b (MT-CYB) from Casuarius bennetti (Dwarf cassowary).